The following is a 795-amino-acid chain: Phenylalanine--tRNA ligase beta subunit (795 aa).

The region spanning 39–148 (ADEFHTVVVG…ADAPVGEDYR (110 aa)) is the tRNA-binding domain. The B5 domain occupies 401–476 (PKRDGITLRA…RVYGYNSIQA (76 aa)). Positions 454, 460, 463, and 464 each coordinate Mg(2+). Positions 701 to 794 (SRYPSIRRDL…LKSEFNATLR (94 aa)) constitute an FDX-ACB domain.

It belongs to the phenylalanyl-tRNA synthetase beta subunit family. Type 1 subfamily. In terms of assembly, tetramer of two alpha and two beta subunits. Mg(2+) serves as cofactor.

Its subcellular location is the cytoplasm. The catalysed reaction is tRNA(Phe) + L-phenylalanine + ATP = L-phenylalanyl-tRNA(Phe) + AMP + diphosphate + H(+). The chain is Phenylalanine--tRNA ligase beta subunit from Idiomarina loihiensis (strain ATCC BAA-735 / DSM 15497 / L2-TR).